A 247-amino-acid polypeptide reads, in one-letter code: tRNA pseudouridine synthase A (247 aa).

The Nucleophile role is filled by aspartate 52. A substrate-binding site is contributed by tyrosine 111.

The protein belongs to the tRNA pseudouridine synthase TruA family. In terms of assembly, homodimer.

It carries out the reaction uridine(38/39/40) in tRNA = pseudouridine(38/39/40) in tRNA. Functionally, formation of pseudouridine at positions 38, 39 and 40 in the anticodon stem and loop of transfer RNAs. In Erythrobacter litoralis (strain HTCC2594), this protein is tRNA pseudouridine synthase A.